The following is a 152-amino-acid chain: Deoxyuridine 5'-triphosphate nucleotidohydrolase (152 aa).

Substrate-binding positions include 71–73 (RSG), Asn84, and 88–90 (TVD).

Belongs to the dUTPase family. Mg(2+) serves as cofactor.

The catalysed reaction is dUTP + H2O = dUMP + diphosphate + H(+). Its pathway is pyrimidine metabolism; dUMP biosynthesis; dUMP from dCTP (dUTP route): step 2/2. This enzyme is involved in nucleotide metabolism: it produces dUMP, the immediate precursor of thymidine nucleotides and it decreases the intracellular concentration of dUTP so that uracil cannot be incorporated into DNA. The chain is Deoxyuridine 5'-triphosphate nucleotidohydrolase from Maricaulis maris (strain MCS10) (Caulobacter maris).